The primary structure comprises 316 residues: Remorin 4.1 (316 aa).

3 disordered regions span residues 1 to 108, 125 to 202, and 267 to 287; these read MLSE…PSEL, NANA…SVGQ, and AQNEVAKARRKAEEKRASAEA. Acidic residues predominate over residues 40–53; sequence EREEEVVVEEELEE. Positions 92 to 104 are enriched in polar residues; sequence RHTSIRSVGSDTA. Residues 125-135 show a composition bias toward low complexity; the sequence is NANAAAAAAAN. Basic and acidic residues-rich tracts occupy residues 143 to 153 and 277 to 287; these read GVDDALGRIGE and KAEEKRASAEA. The stretch at 242–288 forms a coiled coil; sequence VEKANAWLKKYERKLEEKRAKAMEKAQNEVAKARRKAEEKRASAEAK.

This sequence belongs to the remorin family. Interacts with BAK1. Post-translationally, phosphorylated by BRI1. Phosphorylation reduces the binding affinity to BAK1. As to expression, expressed in roots, leaf blades and leaf sheaths. Expressed at low levels in stems and spikelets.

It localises to the cell membrane. In terms of biological role, functions in abscisic acid (ABA) signaling downstream of BZIP23. Acts as antagonistic and negative regulator of brassinosteroid (BR) signaling. Binds to BAK1 and inhibits its interaction with the BR receptor BRI1. Inhibits the formation and subsequent activation of the BRI1-BAK1 receptor complex. This Oryza sativa subsp. japonica (Rice) protein is Remorin 4.1.